Reading from the N-terminus, the 89-residue chain is Cytochrome c oxidase subunit 7A, mitochondrial (89 aa).

A mitochondrion-targeting transit peptide spans 1 to 31; sequence MMNLSRAVVRSFATTAGRRSAAVPKDQIEKG. Topologically, residues 32–58 are mitochondrial matrix; it reads YFEIRKVQEHFQKKDGKPVFLKGSVVD. Residues 59-81 form a helical membrane-spanning segment; that stretch reads NVLYRVTVALALVGIGGMGKLFY. The Mitochondrial intermembrane portion of the chain corresponds to 82 to 89; the sequence is ELSVPKKE.

This sequence belongs to the cytochrome c oxidase VIIa family. As to quaternary structure, component of the cytochrome c oxidase (complex IV, CIV), a multisubunit enzyme composed of a catalytic core of 3 subunits and several supernumerary subunits. The complex exists as a monomer or a dimer and forms supercomplexes (SCs) in the inner mitochondrial membrane with ubiquinol-cytochrome c oxidoreductase (cytochrome b-c1 complex, complex III, CIII).

It localises to the mitochondrion inner membrane. The protein operates within energy metabolism; oxidative phosphorylation. Component of the cytochrome c oxidase, the last enzyme in the mitochondrial electron transport chain which drives oxidative phosphorylation. The respiratory chain contains 3 multisubunit complexes succinate dehydrogenase (complex II, CII), ubiquinol-cytochrome c oxidoreductase (cytochrome b-c1 complex, complex III, CIII) and cytochrome c oxidase (complex IV, CIV), that cooperate to transfer electrons derived from NADH and succinate to molecular oxygen, creating an electrochemical gradient over the inner membrane that drives transmembrane transport and the ATP synthase. Cytochrome c oxidase is the component of the respiratory chain that catalyzes the reduction of oxygen to water. Electrons originating from reduced cytochrome c in the intermembrane space (IMS) are transferred via the dinuclear copper A center (CU(A)) of subunit 2 and heme A of subunit 1 to the active site in subunit 1, a binuclear center (BNC) formed by heme A3 and copper B (CU(B)). The BNC reduces molecular oxygen to 2 water molecules using 4 electrons from cytochrome c in the IMS and 4 protons from the mitochondrial matrix. This is Cytochrome c oxidase subunit 7A, mitochondrial from Drosophila melanogaster (Fruit fly).